The primary structure comprises 368 residues: Histidinol-phosphate aminotransferase (368 aa).

N6-(pyridoxal phosphate)lysine is present on lysine 229.

Belongs to the class-II pyridoxal-phosphate-dependent aminotransferase family. Histidinol-phosphate aminotransferase subfamily. As to quaternary structure, homodimer. Pyridoxal 5'-phosphate serves as cofactor.

It carries out the reaction L-histidinol phosphate + 2-oxoglutarate = 3-(imidazol-4-yl)-2-oxopropyl phosphate + L-glutamate. Its pathway is amino-acid biosynthesis; L-histidine biosynthesis; L-histidine from 5-phospho-alpha-D-ribose 1-diphosphate: step 7/9. In Acidovorax ebreus (strain TPSY) (Diaphorobacter sp. (strain TPSY)), this protein is Histidinol-phosphate aminotransferase.